Reading from the N-terminus, the 680-residue chain is Probable ATP-dependent RNA helicase pitchoune (680 aa).

Residues 1–168 are disordered; that stretch reads MSIREKLLMK…GKPAKDDEPF (168 aa). The span at 29 to 42 shows a compositional bias: polar residues; that stretch reads KNAQKQEPPKQNGN. The span at 59 to 69 shows a compositional bias: acidic residues; the sequence is DEDDDLEEDFQ. Residues 74–83 show a composition bias toward basic residues; it reads PKKKQQKQPP. The span at 95–141 shows a compositional bias: acidic residues; that stretch reads SESDDDEQEDEADEDSDLDEVAEVDEEDVDSGSEDDDQQEDEDEEEP. The short motif at 187-215 is the Q motif element; it reads FASLKGAVSEATLRAIKEMGFTEMTEIQS. The region spanning 218–393 is the Helicase ATP-binding domain; the sequence is LTPLLKGRDL…KLALKSEPIY (176 aa). 231 to 238 is a binding site for ATP; sequence AQTGSGKT. The DEVD box signature appears at 341 to 344; sequence DEVD. The Helicase C-terminal domain maps to 407 to 577; the sequence is GLEQGYIVCP…DIQLQLEKLI (171 aa). The disordered stretch occupies residues 659 to 680; it reads GSASKQRHFKQVNRDQAKKFMR. Over residues 670–680 the composition is skewed to basic and acidic residues; that stretch reads VNRDQAKKFMR.

This sequence belongs to the DEAD box helicase family. DDX18/HAS1 subfamily.

It is found in the nucleus. The protein localises to the nucleolus. It carries out the reaction ATP + H2O = ADP + phosphate + H(+). In terms of biological role, probable RNA-dependent helicase. Functions in cell growth and proliferation. May have a role in ribosome biogenesis and, consequently, in protein biosynthesis. This is Probable ATP-dependent RNA helicase pitchoune (pit) from Drosophila melanogaster (Fruit fly).